A 30-amino-acid polypeptide reads, in one-letter code: VTSITLNLANPTAGQYSSFVDKIRNNVRDP.

This sequence belongs to the ribosome-inactivating protein family. Type 1 RIP subfamily. In terms of tissue distribution, expressed in seeds.

The catalysed reaction is Endohydrolysis of the N-glycosidic bond at one specific adenosine on the 28S rRNA.. Exhibits N-glycosylase activity. Catalyzes the release of one adenine from a ribosome. Acts as a ribosome-inactivating protein and inhibits protein synthesis in a rabbit-reticulocyte lysate system and in various cell lines (in vitro). This chain is rRNA N-glycosylase, found in Saponaria ocymoides (Rock soapwort).